The following is a 378-amino-acid chain: Anhydro-N-acetylmuramic acid kinase (378 aa).

22-29 (GTSLDGAD) lines the ATP pocket.

It belongs to the anhydro-N-acetylmuramic acid kinase family.

The enzyme catalyses 1,6-anhydro-N-acetyl-beta-muramate + ATP + H2O = N-acetyl-D-muramate 6-phosphate + ADP + H(+). The protein operates within amino-sugar metabolism; 1,6-anhydro-N-acetylmuramate degradation. It participates in cell wall biogenesis; peptidoglycan recycling. In terms of biological role, catalyzes the specific phosphorylation of 1,6-anhydro-N-acetylmuramic acid (anhMurNAc) with the simultaneous cleavage of the 1,6-anhydro ring, generating MurNAc-6-P. Is required for the utilization of anhMurNAc either imported from the medium or derived from its own cell wall murein, and thus plays a role in cell wall recycling. The protein is Anhydro-N-acetylmuramic acid kinase of Bordetella petrii (strain ATCC BAA-461 / DSM 12804 / CCUG 43448).